The following is a 510-amino-acid chain: Maturase K (510 aa).

The protein belongs to the intron maturase 2 family. MatK subfamily.

Its subcellular location is the plastid. The protein resides in the chloroplast. Its function is as follows. Usually encoded in the trnK tRNA gene intron. Probably assists in splicing its own and other chloroplast group II introns. The chain is Maturase K from Grahamia bracteata.